A 388-amino-acid chain; its full sequence is Chorismate synthase (388 aa).

2 residues coordinate NADP(+): R39 and R45. Residues 130-132 (RSS), 251-252 (NA), G296, 311-315 (KPIPT), and R337 each bind FMN.

The protein belongs to the chorismate synthase family. As to quaternary structure, homotetramer. FMNH2 is required as a cofactor.

The enzyme catalyses 5-O-(1-carboxyvinyl)-3-phosphoshikimate = chorismate + phosphate. It functions in the pathway metabolic intermediate biosynthesis; chorismate biosynthesis; chorismate from D-erythrose 4-phosphate and phosphoenolpyruvate: step 7/7. In terms of biological role, catalyzes the anti-1,4-elimination of the C-3 phosphate and the C-6 proR hydrogen from 5-enolpyruvylshikimate-3-phosphate (EPSP) to yield chorismate, which is the branch point compound that serves as the starting substrate for the three terminal pathways of aromatic amino acid biosynthesis. This reaction introduces a second double bond into the aromatic ring system. This chain is Chorismate synthase, found in Streptococcus pyogenes serotype M2 (strain MGAS10270).